A 516-amino-acid polypeptide reads, in one-letter code: Glucose-6-phosphate 1-dehydrogenase 5, cytoplasmic (516 aa).

NADP(+)-binding positions include 38–45 (GASGDLAK), R73, Y156, and K183. Residues K183, 213–217 (HYLGK), E251, and D270 each bind D-glucose 6-phosphate. The active-site Proton acceptor is H275. K358 contacts NADP(+). K361 and K366 together coordinate D-glucose 6-phosphate. NADP(+) is bound by residues K367, R371, and R395. Q397 serves as a coordination point for D-glucose 6-phosphate. NADP(+) contacts are provided by residues 403–405 (YMK), 423–425 (DLS), R489, and W511.

It belongs to the glucose-6-phosphate dehydrogenase family. As to quaternary structure, forms homodimer. As to expression, expressed in leaves and stems.

It localises to the cytoplasm. The protein resides in the cytosol. The enzyme catalyses D-glucose 6-phosphate + NADP(+) = 6-phospho-D-glucono-1,5-lactone + NADPH + H(+). It participates in carbohydrate degradation; pentose phosphate pathway; D-ribulose 5-phosphate from D-glucose 6-phosphate (oxidative stage): step 1/3. With respect to regulation, regulated by metabolites. In terms of biological role, catalyzes the rate-limiting step of the oxidative pentose-phosphate pathway, which represents a route for the dissimilation of carbohydrates besides glycolysis. The main function of this enzyme is to provide reducing power (NADPH) and pentose phosphates for fatty acid and nucleic acid synthesis which are involved in membrane synthesis and cell division. The protein is Glucose-6-phosphate 1-dehydrogenase 5, cytoplasmic of Arabidopsis thaliana (Mouse-ear cress).